Consider the following 572-residue polypeptide: Phosphoenolpyruvate-protein phosphotransferase (572 aa).

Histidine 191 acts as the Tele-phosphohistidine intermediate in catalysis. Residues arginine 298 and arginine 334 each coordinate phosphoenolpyruvate. The Mg(2+) site is built by glutamate 433 and aspartate 457. Phosphoenolpyruvate is bound by residues 456–457 (ND) and arginine 467. Residue cysteine 504 is the Proton donor of the active site.

This sequence belongs to the PEP-utilizing enzyme family. Homodimer. The cofactor is Mg(2+).

It localises to the cytoplasm. It catalyses the reaction L-histidyl-[protein] + phosphoenolpyruvate = N(pros)-phospho-L-histidyl-[protein] + pyruvate. General (non sugar-specific) component of the phosphoenolpyruvate-dependent sugar phosphotransferase system (sugar PTS). This major carbohydrate active-transport system catalyzes the phosphorylation of incoming sugar substrates concomitantly with their translocation across the cell membrane. Enzyme I transfers the phosphoryl group from phosphoenolpyruvate (PEP) to the phosphoryl carrier protein (HPr). In Staphylococcus aureus (strain COL), this protein is Phosphoenolpyruvate-protein phosphotransferase (ptsI).